A 2313-amino-acid chain; its full sequence is Voltage-dependent R-type calcium channel subunit alpha-1E (2313 aa).

The segment at 1-38 (MARFGEAVVARPGSGDGDSDQSRNRQGTPVPASGQAAA) is disordered. Residues 1-89 (MARFGEAVVA…KYAKKLIDWP (89 aa)) lie on the Cytoplasmic side of the membrane. 2 positions are modified to phosphoserine: Ser-14 and Ser-19. One copy of the I repeat lies at 76 to 354 (NIVRKYAKKL…LVLGVLSGEF (279 aa)). Residues 90–108 (PFEYMILATIIANCIVLAL) traverse the membrane as a helical segment. The Extracellular portion of the chain corresponds to 109-127 (EQHLPEDDKTPMSRRLEKT). A helical membrane pass occupies residues 128–146 (EPYFIGIFCFEAGIKIVAL). The Cytoplasmic segment spans residues 147 to 158 (GFIFHKGSYLRN). Residues 159 to 173 (GWNVMDFIVVLSGIL) traverse the membrane as a helical segment. The Extracellular segment spans residues 174 to 185 (ATAGTHFNTHVD). The chain crosses the membrane as a helical span at residues 186–205 (LRTLRAVRVLRPLKLVSGIP). Topologically, residues 206–223 (SLQIVLKSIMKAMVPLLQ) are cytoplasmic. Residues 224-244 (IGLLLFFAILMFAIIGLEFYS) form a helical membrane-spanning segment. The Extracellular portion of the chain corresponds to 245–326 (GKLHRACFMN…NTNDALGATW (82 aa)). Asn-254 carries an N-linked (GlcNAc...) asparagine glycan. A helical membrane pass occupies residues 327–350 (NWLYFIPLIIIGSFFVLNLVLGVL). The Cytoplasmic portion of the chain corresponds to 351-476 (SGEFAKERER…ISIRHMVKSQ (126 aa)). A binding to the beta subunit region spans residues 374–391 (QQIERELNGYRAWIDKAE). Asp-426 serves as a coordination point for Ca(2+). Ser-427 is subject to Phosphoserine. Residues Ser-428, Glu-430, and Cys-432 each coordinate Ca(2+). Thr-440 carries the post-translational modification Phosphothreonine. One copy of the II repeat lies at 462 to 706 (ERLLRISIRH…VFLAIAVDNL (245 aa)). The chain crosses the membrane as a helical span at residues 477–496 (VFYWIVLSLVALNTACVAIV). Over 497–509 (HHNQPQWLTHLLY) the chain is Extracellular. The helical transmembrane segment at 510 to 529 (YAEFLFLGLFLLEMSLKMYG) threads the bilayer. The Cytoplasmic segment spans residues 530–538 (MGPRLYFHS). Residues 539 to 557 (SFNCFDFGVTVGSIFEVVW) form a helical membrane-spanning segment. The Extracellular segment spans residues 558–567 (AIFRPGTSFG). The chain crosses the membrane as a helical span at residues 568–586 (ISVLRALRLLRIFKITKYW). The Cytoplasmic segment spans residues 587–605 (ASLRNLVVSLMSSMKSIIS). A helical transmembrane segment spans residues 606 to 625 (LLFLLFLFIVVFALLGMQLF). The Extracellular segment spans residues 626–678 (GGRFNFNDGTPSANFDTFPAAIMTVFQILTGEDWNEVMYNGIRSQGGVSSGMW). A helical membrane pass occupies residues 679–703 (SAIYFIVLTLFGNYTLLNVFLAIAV). Over 704-1148 (DNLANAQELT…TNPIRRACHY (445 aa)) the chain is Cytoplasmic. The tract at residues 729 to 774 (LQKAKEVSPMSAPNMPSIERDRRRRHHMSMWEPRSSHLRERRRRHH) is disordered. Ser-736, Ser-745, Ser-793, Ser-815, and Ser-855 each carry phosphoserine. The segment at 851–984 (SRGGSLKGDG…EERAQDLRRT (134 aa)) is disordered. A compositionally biased stretch (polar residues) spans 866 to 875 (ALDNQRTPLS). Positions 913 to 926 (RHRQSQRRSRHRRV) are enriched in basic residues. Residues 933-945 (SSSASRSRSASQE) show a composition bias toward low complexity. Phosphoserine is present on Ser-947. The segment covering 955–983 (EGEKDHELRGNHGAKEPTIQEERAQDLRR) has biased composition (basic and acidic residues). The residue at position 1097 (Ser-1097) is a Phosphoserine. Positions 1103–1125 (EIREDEEEVEKKKQKKEKRETGK) are disordered. One copy of the III repeat lies at 1140-1426 (NPIRRACHYI…IFVALIIITF (287 aa)). The helical transmembrane segment at 1149–1165 (IVNLRYFEMCILLVIAA) threads the bilayer. Topologically, residues 1166–1189 (SSIALAAEDPVLTNSERNKVLRYF) are extracellular. A helical membrane pass occupies residues 1190-1209 (DYVFTGVFTFEMVIKMIDQG). Residues 1210–1217 (LILQDGSY) are Cytoplasmic-facing. Residues 1218–1240 (FRDLWNILDFVVVVGALVAFALA) traverse the membrane as a helical segment. The Extracellular segment spans residues 1241 to 1254 (NALGTNKGRDIKTI). The chain crosses the membrane as a helical span at residues 1255–1272 (KSLRVLRVLRPLKTIKRL). The Cytoplasmic segment spans residues 1273 to 1291 (PKLKAVFDCVVTSLKNVFN). The helical transmembrane segment at 1292 to 1311 (ILIVYKLFMFIFAVIAVQLF) threads the bilayer. The Extracellular portion of the chain corresponds to 1312 to 1398 (KGKFFYCTDS…RGPSRSNRME (87 aa)). A helical transmembrane segment spans residues 1399–1422 (MSIFYVVYFVVFPFFFVNIFVALI). The Cytoplasmic segment spans residues 1423–1479 (IITFQEQGDKMMEECSLEKNERACIDFAISAKPLTRYMPQNRHTFQYRVWHFVVSPS). An IV repeat occupies 1463–1726 (NRHTFQYRVW…LFVAVIMDNF (264 aa)). Residues 1480-1498 (FEYTIMAMIALNTVVLMMK) form a helical membrane-spanning segment. At 1499-1513 (YYSAPCTYELALKYL) the chain is on the extracellular side. Residues 1514–1533 (NIAFTMVFSLECVLKVIAFG) form a helical membrane-spanning segment. At 1534-1541 (FLNYFRDT) the chain is on the cytoplasmic side. Residues 1542–1560 (WNIFDFITVIGSITEIILT) form a helical membrane-spanning segment. The Extracellular portion of the chain corresponds to 1561–1571 (DSKLVNTSGFN). N-linked (GlcNAc...) asparagine glycosylation is found at Asn-1566 and Asn-1571. The chain crosses the membrane as a helical span at residues 1572-1590 (MSFLKLFRAARLIKLLRQG). Residues 1591-1609 (YTIRILLWTFVQSFKALPY) are Cytoplasmic-facing. Residues 1610-1629 (VCLLIAMLFFIYAIIGMQVF) form a helical membrane-spanning segment. The Extracellular segment spans residues 1630 to 1698 (GNIKLDEESH…NENERCGTDL (69 aa)). A helical membrane pass occupies residues 1699 to 1724 (AYVYFVSFIFFCSFLMLNLFVAVIMD). Residues 1725–2313 (NFEYLTRDSS…LSDTEEDDKC (589 aa)) lie on the Cytoplasmic side of the membrane. The 36-residue stretch at 1739–1774 (HHLDEFVRVWAEYDRAACGRIHYTEMYEMLTLMSPP) folds into the EF-hand domain. Ca(2+) contacts are provided by Asp-1752, Arg-1758, and Glu-1763. 3 disordered regions span residues 1970-2170 (VSEL…RPLL), 2206-2225 (CLTE…ASPQ), and 2263-2295 (SNTI…GPGM). Residues 2012–2023 (TDPSSMRRSFST) show a composition bias toward polar residues. Residues 2055–2064 (HSSLRLSAHR) show a composition bias toward low complexity. Over residues 2065–2085 (LNSDSGHKSDTHRSGGRERGR) the composition is skewed to basic and acidic residues. Phosphoserine is present on residues Ser-2094 and Ser-2113. The segment covering 2101 to 2118 (NSEERGTQADWESPERRQ) has biased composition (basic and acidic residues). Polar residues predominate over residues 2129-2152 (TPNRQGTGSLSESSIPSVSDTSTP). Residues 2210–2225 (SSNSPHPQQSQHASPQ) are compositionally biased toward low complexity.

Belongs to the calcium channel alpha-1 subunit (TC 1.A.1.11) family. CACNA1E subfamily. Interacts with EFHC1. Voltage-dependent calcium channels are multisubunit complexes, consisting of alpha-1, alpha-2, beta and delta subunits in a 1:1:1:1 ratio. The channel activity is directed by the pore-forming and voltage-sensitive alpha-1 subunit. In many cases, this subunit is sufficient to generate voltage-sensitive calcium channel activity. The auxiliary subunits beta and alpha-2/delta linked by a disulfide bridge regulate the channel activity. As to expression, expressed in neuronal tissues and in kidney.

It localises to the membrane. The catalysed reaction is Ca(2+)(in) = Ca(2+)(out). Its function is as follows. Voltage-sensitive calcium channels (VSCC) mediate the entry of calcium ions into excitable cells. They are also involved in a variety of calcium-dependent processes, including muscle contraction, hormone or neurotransmitter release, gene expression, cell motility, cell division and cell death. The isoform alpha-1E gives rise to R-type calcium currents. R-type calcium channels belong to the 'high-voltage activated' (HVA) group and are blocked by nickel. They are however insensitive to dihydropyridines (DHP). Calcium channels containing alpha-1E subunit could be involved in the modulation of firing patterns of neurons which is important for information processing. Functionally, voltage-sensitive calcium channels (VSCC) mediate the entry of calcium ions into excitable cells. They are also involved in a variety of calcium-dependent processes, including muscle contraction, hormone or neurotransmitter release, gene expression, cell motility, cell division and cell death. The isoform alpha-1E gives rise to R-type calcium currents. This is Voltage-dependent R-type calcium channel subunit alpha-1E (CACNA1E) from Homo sapiens (Human).